The primary structure comprises 547 residues: MGGCIPFLKAARALCPRIMPPLLLLSAFIFLVSVLGGAPGHNPDRRTKMVSIHSLSELERLKLQETAYHELVARHFLSEFKPDRALPIDRPNTLDKWFLILRGQQRAVSHKTFGISLEEVLVNEFTRRKHLELTATMQVEEATGQAAGRRRGNVVRRVFGRIRRFFSRRRNEPTLPREFTRRGRRGAVSVDSLAELEDGALLLQTLQLSKISFPIGQRLLGSKRKMSLNPIAKQIPQVVEACCQFIEKHGLSAVGIFTLEYSVQRVRQLREEFDQGLDVVLDDNQNVHDVAALLKEFFRDMKDSLLPDDLYMSFLLTATLKPQDQLSALQLLVYLMPPCHSDTLERLLKALHKITENCEDSIGIDGQLVPGNRMTSTNLALVFGSALLKKGKFGKRESRKTKLGIDHYVASVNVVRAMIDNWDVLFQVPPHIQRQVAKRVWKSSPEALDFIRRRNLRKIQSARIKMEEDALLSDPVETSAEARAAVLAQSKPSDEGSSEEPAVPSGTARSHDDEEGAGNPPIPEQDRPLLRVPREKEAKTGVSYFFP.

The first 40 residues, 1 to 40 (MGGCIPFLKAARALCPRIMPPLLLLSAFIFLVSVLGGAPG), serve as a signal peptide directing secretion. In terms of domain architecture, Rho-GAP spans 226–426 (MSLNPIAKQI…AMIDNWDVLF (201 aa)). The interval 485-547 (AVLAQSKPSD…AKTGVSYFFP (63 aa)) is disordered. Residues 524-539 (EQDRPLLRVPREKEAK) show a composition bias toward basic and acidic residues.

In terms of assembly, may interacts (via the Rho-GAP domain) with the active form of RAC1. In terms of tissue distribution, detected in the outer root sheath of hair follicles at the level of the stem cell bulge, during the anagen and telogen phases of hair growth (at protein level).

In terms of biological role, GTPase activator for the Rho-type GTPases by converting them to an inactive GDP-bound state. This chain is Rho GTPase-activating protein 36 (ARHGAP36), found in Homo sapiens (Human).